We begin with the raw amino-acid sequence, 448 residues long: Nicotinate phosphoribosyltransferase pncB1 (448 aa).

The segment at 1–21 is disordered; the sequence is MGPPPAARRREGEPDNQDPAG. Phosphohistidine is present on histidine 212. The segment at 353–372 is disordered; it reads RSSYKESPGGRKEALRRSRA.

It belongs to the NAPRTase family. Post-translationally, transiently phosphorylated on a His residue during the reaction cycle. Phosphorylation strongly increases the affinity for substrates and increases the rate of nicotinate D-ribonucleotide production. Dephosphorylation regenerates the low-affinity form of the enzyme, leading to product release.

The enzyme catalyses nicotinate + 5-phospho-alpha-D-ribose 1-diphosphate + ATP + H2O = nicotinate beta-D-ribonucleotide + ADP + phosphate + diphosphate. It functions in the pathway cofactor biosynthesis; NAD(+) biosynthesis; nicotinate D-ribonucleotide from nicotinate: step 1/1. In terms of biological role, involved in the Preiss-Handler pathway, which is a recycling route that permits the salvage of free nicotinamide (NM) and nicotinic acid (Na) involved in the NAD biosynthesis. Catalyzes the synthesis of beta-nicotinate D-ribonucleotide from nicotinate and 5-phospho-D-ribose 1-phosphate at the expense of ATP. It is not able to use nicotinamide. PncB1 contributes to basal NAD level. This Mycobacterium tuberculosis (strain ATCC 25618 / H37Rv) protein is Nicotinate phosphoribosyltransferase pncB1 (pncB1).